The following is a 263-amino-acid chain: Chromosomal replication initiator protein DnaA (263 aa).

A region of interest (domain I, interacts with DnaA modulators) is located at residue Glu1. A region of interest (domain II) is located at residue Glu1. Residues 1 to 179 (ESGMGKTHLL…GSVSRLNFWS (179 aa)) are domain III, AAA+ region. Positions 3, 5, 6, and 7 each coordinate ATP. A domain IV, binds dsDNA region spans residues 180 to 263 (QQNPEEKIIT…HTLAQIGEEF (84 aa)).

The protein belongs to the DnaA family. In terms of assembly, oligomerizes as a right-handed, spiral filament on DNA at oriC.

Its subcellular location is the cytoplasm. In terms of biological role, plays an essential role in the initiation and regulation of chromosomal replication. ATP-DnaA binds to the origin of replication (oriC) to initiate formation of the DNA replication initiation complex once per cell cycle. Binds the DnaA box (a 9 base pair repeat at the origin) and separates the double-stranded (ds)DNA. Forms a right-handed helical filament on oriC DNA; dsDNA binds to the exterior of the filament while single-stranded (ss)DNA is stabiized in the filament's interior. The ATP-DnaA-oriC complex binds and stabilizes one strand of the AT-rich DNA unwinding element (DUE), permitting loading of DNA polymerase. After initiation quickly degrades to an ADP-DnaA complex that is not apt for DNA replication. Binds acidic phospholipids. In Mycoplasma mycoides, this protein is Chromosomal replication initiator protein DnaA.